Reading from the N-terminus, the 251-residue chain is Aliphatic sulfonates import ATP-binding protein SsuB (251 aa).

The ABC transporter domain maps to Gly-19 to Arg-238. ATP is bound at residue Gly-51–Ser-58.

The protein belongs to the ABC transporter superfamily. Aliphatic sulfonates importer (TC 3.A.1.17.2) family. The complex is composed of two ATP-binding proteins (SsuB), two transmembrane proteins (SsuC) and a solute-binding protein (SsuA).

It localises to the cell membrane. It catalyses the reaction ATP + H2O + aliphatic sulfonate-[sulfonate-binding protein]Side 1 = ADP + phosphate + aliphatic sulfonateSide 2 + [sulfonate-binding protein]Side 1.. Functionally, part of the ABC transporter complex SsuABC involved in aliphatic sulfonates import. Responsible for energy coupling to the transport system. This Mycobacterium avium (strain 104) protein is Aliphatic sulfonates import ATP-binding protein SsuB.